The following is a 60-amino-acid chain: Toxin FS-2 (60 aa).

Disulfide bonds link C3–C22, C17–C39, C41–C52, and C53–C58. Residues 41–48 form an important for binding to L-type calcium channels region; the sequence is CPTAMWPY.

The protein belongs to the three-finger toxin family. Short-chain subfamily. L-type calcium blocker sub-subfamily. In terms of tissue distribution, expressed by the venom gland.

It is found in the secreted. Its function is as follows. Specific blocker of the voltage-dependent L-type calcium channel (Cav1/CACNA1). Inhibits cardiac contractions. The protein is Toxin FS-2 of Dendroaspis polylepis polylepis (Black mamba).